Here is a 114-residue protein sequence, read N- to C-terminus: Snake venom vascular endothelial growth factor (114 aa).

Glutamine 1 carries the pyrrolidone carboxylic acid modification. Intrachain disulfides connect cysteine 14–cysteine 56, cysteine 45–cysteine 91, and cysteine 49–cysteine 93. The interval 92 to 114 (ECRPGSTVNNGKRKKNPKEGEPR) is disordered.

This sequence belongs to the PDGF/VEGF growth factor family. Snake venom VEGF subfamily. As to quaternary structure, homodimer; disulfide-linked. Interacts with human VEGF receptor 1/FLT1. Interacts with human VEGF receptor 2/KDR. As to expression, expressed by venom gland.

It is found in the secreted. Its function is as follows. Snake venom vascular endothelial growth factor (svVEGF) that may contribute to venom dispersion and prey subjugation by inducing vascular permeability and hypotension. Induces an increase in capillary permeability after intradermal injection, as well as a drastic hypotensive effect after intravenous injection. The hypotension is mediated by nitric oxide (NO), which is produced by VEGF-activated endothelium NO synthase. Induces angiogenesis and migration of human vascular endothelial cells in vitro. Exhibits angiogenic activity by inducing human umbilical vein endothelial cells (HUVEC) to develop vessels in vitro. Induces cellular migration of HUVEC cells towards a wound in scratch assays, enhancing wound closure after 12 h by 49.5%. Induces dose-dependent leukocyte recruitment to the peritoneal cavity leading to increased vascular permeability in mice. In Crotalus durissus terrificus (South American rattlesnake), this protein is Snake venom vascular endothelial growth factor.